A 292-amino-acid chain; its full sequence is 4-hydroxy-tetrahydrodipicolinate synthase (292 aa).

Thr-48 is a binding site for pyruvate. The Proton donor/acceptor role is filled by Tyr-136. The Schiff-base intermediate with substrate role is filled by Lys-164. A pyruvate-binding site is contributed by Ile-204.

It belongs to the DapA family. As to quaternary structure, homotetramer; dimer of dimers.

The protein localises to the cytoplasm. It carries out the reaction L-aspartate 4-semialdehyde + pyruvate = (2S,4S)-4-hydroxy-2,3,4,5-tetrahydrodipicolinate + H2O + H(+). It participates in amino-acid biosynthesis; L-lysine biosynthesis via DAP pathway; (S)-tetrahydrodipicolinate from L-aspartate: step 3/4. Functionally, catalyzes the condensation of (S)-aspartate-beta-semialdehyde [(S)-ASA] and pyruvate to 4-hydroxy-tetrahydrodipicolinate (HTPA). This Acetivibrio thermocellus (strain ATCC 27405 / DSM 1237 / JCM 9322 / NBRC 103400 / NCIMB 10682 / NRRL B-4536 / VPI 7372) (Clostridium thermocellum) protein is 4-hydroxy-tetrahydrodipicolinate synthase.